Here is a 200-residue protein sequence, read N- to C-terminus: Holliday junction branch migration complex subunit RuvA (200 aa).

A domain I region spans residues 1-63 (MIASVRGEVL…EDSMTLYGFP (63 aa)). The domain II stretch occupies residues 64-142 (DSESKELFGL…AVGSTSGAVP (79 aa)). The flexible linker stretch occupies residues 142–146 (PLGAG). Residues 147-200 (GGGSVRDQIVEALVGLGFPAKQAEQATDSVLAEAPESTTSSALRSALSLLGKTR) are domain III.

The protein belongs to the RuvA family. As to quaternary structure, homotetramer. Forms an RuvA(8)-RuvB(12)-Holliday junction (HJ) complex. HJ DNA is sandwiched between 2 RuvA tetramers; dsDNA enters through RuvA and exits via RuvB. An RuvB hexamer assembles on each DNA strand where it exits the tetramer. Each RuvB hexamer is contacted by two RuvA subunits (via domain III) on 2 adjacent RuvB subunits; this complex drives branch migration. In the full resolvosome a probable DNA-RuvA(4)-RuvB(12)-RuvC(2) complex forms which resolves the HJ.

It is found in the cytoplasm. Functionally, the RuvA-RuvB-RuvC complex processes Holliday junction (HJ) DNA during genetic recombination and DNA repair, while the RuvA-RuvB complex plays an important role in the rescue of blocked DNA replication forks via replication fork reversal (RFR). RuvA specifically binds to HJ cruciform DNA, conferring on it an open structure. The RuvB hexamer acts as an ATP-dependent pump, pulling dsDNA into and through the RuvAB complex. HJ branch migration allows RuvC to scan DNA until it finds its consensus sequence, where it cleaves and resolves the cruciform DNA. The polypeptide is Holliday junction branch migration complex subunit RuvA (Rhodococcus opacus (strain B4)).